Consider the following 173-residue polypeptide: Flavodoxin (173 aa).

Positions 2-168 (IGIFFSTSTG…RVAGWVEAVV (167 aa)) constitute a Flavodoxin-like domain.

This sequence belongs to the flavodoxin family. FMN serves as cofactor.

Low-potential electron donor to a number of redox enzymes. The polypeptide is Flavodoxin (Chondrus crispus (Carrageen Irish moss)).